Consider the following 464-residue polypeptide: Argininosuccinate lyase (464 aa).

The protein belongs to the lyase 1 family. Argininosuccinate lyase subfamily.

It is found in the cytoplasm. It carries out the reaction 2-(N(omega)-L-arginino)succinate = fumarate + L-arginine. Its pathway is amino-acid biosynthesis; L-arginine biosynthesis; L-arginine from L-ornithine and carbamoyl phosphate: step 3/3. This chain is Argininosuccinate lyase, found in Moorella thermoacetica (strain ATCC 39073 / JCM 9320).